Consider the following 310-residue polypeptide: Methionyl-tRNA formyltransferase (310 aa).

111–114 (SLLP) serves as a coordination point for (6S)-5,6,7,8-tetrahydrofolate.

Belongs to the Fmt family.

The catalysed reaction is L-methionyl-tRNA(fMet) + (6R)-10-formyltetrahydrofolate = N-formyl-L-methionyl-tRNA(fMet) + (6S)-5,6,7,8-tetrahydrofolate + H(+). Attaches a formyl group to the free amino group of methionyl-tRNA(fMet). The formyl group appears to play a dual role in the initiator identity of N-formylmethionyl-tRNA by promoting its recognition by IF2 and preventing the misappropriation of this tRNA by the elongation apparatus. This chain is Methionyl-tRNA formyltransferase, found in Afipia carboxidovorans (strain ATCC 49405 / DSM 1227 / KCTC 32145 / OM5) (Oligotropha carboxidovorans).